The sequence spans 305 residues: UDP-N-acetylenolpyruvoylglucosamine reductase (305 aa).

Residues 37 to 202 (GIGGPARFLA…LSVTFNLEPK (166 aa)) enclose the FAD-binding PCMH-type domain. Arg-183 is a catalytic residue.

The protein belongs to the MurB family. FAD is required as a cofactor.

It is found in the cytoplasm. It carries out the reaction UDP-N-acetyl-alpha-D-muramate + NADP(+) = UDP-N-acetyl-3-O-(1-carboxyvinyl)-alpha-D-glucosamine + NADPH + H(+). It participates in cell wall biogenesis; peptidoglycan biosynthesis. Cell wall formation. This is UDP-N-acetylenolpyruvoylglucosamine reductase from Rhodopirellula baltica (strain DSM 10527 / NCIMB 13988 / SH1).